The sequence spans 229 residues: Ribonuclease T (229 aa).

An Exonuclease domain is found at 23–197 (VIIDVETAGF…YDTERTAKLF (175 aa)). Mg(2+) contacts are provided by D26, E28, H184, and D189. Residue H184 is the Proton donor/acceptor of the active site.

This sequence belongs to the RNase T family. Homodimer. It depends on Mg(2+) as a cofactor.

Its function is as follows. Trims short 3' overhangs of a variety of RNA species, leaving a one or two nucleotide 3' overhang. Responsible for the end-turnover of tRNA: specifically removes the terminal AMP residue from uncharged tRNA (tRNA-C-C-A). Also appears to be involved in tRNA biosynthesis. The protein is Ribonuclease T of Haemophilus influenzae (strain ATCC 51907 / DSM 11121 / KW20 / Rd).